The chain runs to 530 residues: MYSPSSPQSSEPMSPESDYGGGNSINNSNSSNNSSANQSPQFSVGKMKVDSEEKVKKRQVRLLKNRQSAALSRSRKKEYIANLESKAQELTHSTQELHVQYNKISSTTFETKSRLEFLEKSLRSLRMENEFLRTKFEDINNNNIKSHSRSNSSSSSLSSSPTTPNTTTTTTTSTTPVQLIINNHKSESSPLLLNSTNSSPTIASTLINTKDIINVSQNKNNNNNNNNNNNNNNNNNNNNNNNNNTTNLLDQQQQSPTPVLESLIKKDREREILIGINKINHFKFNNNNINNINNINNNNNNINNIVNDEEDEEKCKINSVEESNSNHLNNNFSNLSFSSPNVNSQPIYLTRVRSSSYHPSNYLGMESPTINAGHHMIIPTESLILSSNHHHHHHNNINNNSNNHYHHESSTASSSSGGNKLPSLYSITNNLGGGNSSSPSSSSTSSPSTSSPSTPKSMGFPSPIFIGSSGSGPSSSGSQINHRSSIIGLSKLKSYNNNNNSNNNNSPILYPISTNQYPSLINNNNNNNNY.

2 stretches are compositionally biased toward low complexity: residues 1–17 (MYSP…SPES) and 24–39 (SINN…ANQS). Positions 1–76 (MYSPSSPQSS…QSAALSRSRK (76 aa)) are disordered. The bZIP domain occupies 55-118 (VKKRQVRLLK…FETKSRLEFL (64 aa)). The basic motif stretch occupies residues 56–77 (KKRQVRLLKNRQSAALSRSRKK). Residues 83 to 104 (LESKAQELTHSTQELHVQYNKI) form a leucine-zipper region. Disordered regions lie at residues 142 to 177 (NNIK…TTPV), 216 to 258 (SQNK…SPTP), and 389 to 481 (HHHH…SQIN). Low complexity-rich tracts occupy residues 149-176 (RSNS…STTP) and 220-247 (NNNN…NTTN). Residues 248–257 (LLDQQQQSPT) show a composition bias toward polar residues. Residues 436–478 (SSSPSSSSTSSPSTSSPSTPKSMGFPSPIFIGSSGSGPSSSGS) show a composition bias toward low complexity.

The protein belongs to the bZIP family.

It is found in the nucleus. Probable transcriptional regulator. This Dictyostelium discoideum (Social amoeba) protein is Probable basic-leucine zipper transcription factor L (bzpL).